The sequence spans 55 residues: Large ribosomal subunit protein bL33 (55 aa).

Belongs to the bacterial ribosomal protein bL33 family.

The polypeptide is Large ribosomal subunit protein bL33 (Granulibacter bethesdensis (strain ATCC BAA-1260 / CGDNIH1)).